The sequence spans 998 residues: Collagen alpha-1(I) chain (998 aa).

Positions 1–998 are disordered; it reads SYGYDEKGGV…GPPGPPGPPG (998 aa). A compositionally biased stretch (low complexity) spans 9 to 22; the sequence is GVSVPGPMGPSGPR. Pro25, Pro28, Pro30, Pro39, Pro42, Pro45, Pro59, Pro74, Pro80, Pro89, and Pro95 each carry 4-hydroxyproline. Positions 62 to 76 are enriched in basic and acidic residues; that stretch reads NGDDGEAGKPGRPGE. Lys98 bears the 5-hydroxylysine; alternate mark. The O-linked (Gal...) hydroxylysine; alternate glycan is linked to Lys98. Ser104 carries the post-translational modification Phosphoserine. Over residues 112–128 the composition is skewed to low complexity; sequence DAGPAGPKGEPGSPGEN. 4-hydroxyproline occurs at positions 122, 125, 131, 140, 146, 167, 176, 179, 206, 209, 221, 227, 236, 242, 245, and 260. Residues 146–164 are compositionally biased toward low complexity; that stretch reads PGASGPAGARGNDGATGAA. Positions 166 to 178 are enriched in pro residues; that stretch reads PPGPTGPAGPPGF. Positions 212-251 are enriched in low complexity; it reads AGAAGPAGNPGADGQPGAKGANGAPGIAGAPGFPGARGPS. A 5-hydroxylysine modification is found at Lys263. 8 positions are modified to 4-hydroxyproline: Pro269, Pro272, Pro284, Pro293, Pro308, Pro314, Pro323, and Pro329. Residues 318 to 327 are compositionally biased toward gly residues; that stretch reads GERGGPGSRG. Residue Lys338 is modified to 5-hydroxylysine. Pro347, Pro356, Pro362, Pro368, Pro377, Pro380, Pro389, Pro398, Pro404, Pro416, Pro425, Pro434, Pro437, Pro455, Pro472, Pro478, Pro484, Pro490, Pro496, Pro502, Pro514, Pro523, Pro537, Pro543, and Pro552 each carry 4-hydroxyproline. A compositionally biased stretch (low complexity) spans 371-397; the sequence is KGLTGSPGSPGPDGKTGPPGPAGQDGR. Residues 406-425 are compositionally biased toward low complexity; that stretch reads ARGQAGVMGFPGPKGAAGEP. The span at 484–493 shows a compositional bias: low complexity; sequence PGEAGKPGEQ. Lys564 bears the 5-hydroxylysine mark. Pro570, Pro585, and Pro591 each carry 4-hydroxyproline. Over residues 597 to 611 the composition is skewed to low complexity; the sequence is SGPSGPAGPTGARGA. The residue at position 600 (Ser600) is a Phosphoserine. 4-hydroxyproline is present on residues Pro612, Pro618, Pro621, Pro630, Pro636, Pro654, Pro663, and Pro672. Low complexity predominate over residues 624–651; that stretch reads AGFAGPPGADGQPGAKGEPGDAGAKGDA. Residues 653 to 665 are compositionally biased toward pro residues; sequence PPGPAGPTGPPGP. Lys675 carries the 5-hydroxylysine modification. Low complexity predominate over residues 680 to 696; it reads SAGPPGATGFPGAAGRV. 4-hydroxyproline is present on residues Pro684 and Pro690. Pro698 bears the 3-hydroxyproline mark. Residues Pro699, Pro708, Pro711, Pro732, Pro741, Pro749, Pro758, Pro776, Pro785, Pro788, Pro794, Pro809, Pro815, Pro821, Pro830, and Pro836 each carry the 4-hydroxyproline modification. Residues 725–734 are compositionally biased toward low complexity; that stretch reads ETGPAGRPGE. Positions 746 to 758 are enriched in low complexity; sequence KGSPGADGPAGAP. Positions 808 to 818 are enriched in pro residues; the sequence is PPGPMGPPGLA. The residue at position 845 (Lys845) is a 5-hydroxylysine. Over residues 853–868 the composition is skewed to pro residues; it reads PGPPGAPGAPGAPGPV. 3 positions are modified to 4-hydroxyproline: Pro856, Pro859, and Pro862. Low complexity predominate over residues 889–903; it reads AGPAGARGPAGPQGP. Residues 904–918 are compositionally biased toward basic and acidic residues; that stretch reads RGDKGETGEQGDRGI. Lys907 carries the post-translational modification 5-hydroxylysine. 5-hydroxylysine; alternate is present on Lys919. Lys919 carries O-linked (Gal...) hydroxylysine; alternate glycosylation. 4-hydroxyproline occurs at positions 934, 937, 955, and 970. A compositionally biased stretch (low complexity) spans 937–970; sequence PGEQGPSGASGPAGPRGPPGSAGSPGKDGLNGLP. The residue at position 975 (Pro975) is a 3-hydroxyproline. The residue at position 976 (Pro976) is a 4-hydroxyproline. Pro residues predominate over residues 988-998; that stretch reads VGPPGPPGPPG. Residue Pro990 is modified to 3-hydroxyproline. Residue Pro991 is modified to 4-hydroxyproline. Pro993 is subject to 3-hydroxyproline. Pro994 is subject to 4-hydroxyproline. 3-hydroxyproline is present on Pro996. Pro997 is modified (4-hydroxyproline).

Belongs to the fibrillar collagen family. Trimers of one alpha 2(I) and two alpha 1(I) chains. Post-translationally, contains mostly 4-hydroxyproline. Proline residues at the third position of the tripeptide repeating unit (G-X-Y) are hydroxylated in some or all of the chains. In terms of processing, contains 3-hydroxyproline at a few sites. This modification occurs on the first proline residue in the sequence motif Gly-Pro-Hyp, where Hyp is 4-hydroxyproline. Lysine residues at the third position of the tripeptide repeating unit (G-X-Y) are 5-hydroxylated in some or all of the chains. Post-translationally, O-glycosylated on hydroxylated lysine residues. The O-linked glycan consists of a Glc-Gal disaccharide. As to expression, expressed in bones.

It is found in the secreted. The protein localises to the extracellular space. It localises to the extracellular matrix. Its function is as follows. Type I collagen is a member of group I collagen (fibrillar forming collagen). This Nothrotheriops shastensis (Shasta ground sloth) protein is Collagen alpha-1(I) chain.